Consider the following 251-residue polypeptide: Hydroxyacylglutathione hydrolase (251 aa).

Zn(2+) is bound by residues His53, His55, Asp57, His58, His110, Asp127, and His165.

Belongs to the metallo-beta-lactamase superfamily. Glyoxalase II family. In terms of assembly, monomer. Zn(2+) is required as a cofactor.

It carries out the reaction an S-(2-hydroxyacyl)glutathione + H2O = a 2-hydroxy carboxylate + glutathione + H(+). It participates in secondary metabolite metabolism; methylglyoxal degradation; (R)-lactate from methylglyoxal: step 2/2. Its function is as follows. Thiolesterase that catalyzes the hydrolysis of S-D-lactoyl-glutathione to form glutathione and D-lactic acid. This Escherichia coli (strain 55989 / EAEC) protein is Hydroxyacylglutathione hydrolase.